A 101-amino-acid polypeptide reads, in one-letter code: NADH-quinone oxidoreductase subunit K (101 aa).

Helical transmembrane passes span 4–24 (VGHYLAVSAVLFTLGVLGIFI), 29–49 (IIVILMAIELILLAVNINLVA), and 65–85 (FVLTVAAGEAAIGLAILVIYF).

The protein belongs to the complex I subunit 4L family. In terms of assembly, NDH-1 is composed of 14 different subunits. Subunits NuoA, H, J, K, L, M, N constitute the membrane sector of the complex.

It localises to the cell inner membrane. The catalysed reaction is a quinone + NADH + 5 H(+)(in) = a quinol + NAD(+) + 4 H(+)(out). Functionally, NDH-1 shuttles electrons from NADH, via FMN and iron-sulfur (Fe-S) centers, to quinones in the respiratory chain. The immediate electron acceptor for the enzyme in this species is believed to be ubiquinone. Couples the redox reaction to proton translocation (for every two electrons transferred, four hydrogen ions are translocated across the cytoplasmic membrane), and thus conserves the redox energy in a proton gradient. This Sphingopyxis alaskensis (strain DSM 13593 / LMG 18877 / RB2256) (Sphingomonas alaskensis) protein is NADH-quinone oxidoreductase subunit K.